The chain runs to 170 residues: Large ribosomal subunit protein uL15 (170 aa).

A compositionally biased stretch (basic and acidic residues) spans 1–12 (MKLHDLRPAEGS). Residues 1-50 (MKLHDLRPAEGSHRKRKRIGRGHGSGKVKTGGKGMMGQKARSGPGPYRTF) are disordered. Basic residues predominate over residues 13-26 (HRKRKRIGRGHGSG).

Belongs to the universal ribosomal protein uL15 family. As to quaternary structure, part of the 50S ribosomal subunit.

In terms of biological role, binds to the 23S rRNA. The chain is Large ribosomal subunit protein uL15 from Chloroflexus aggregans (strain MD-66 / DSM 9485).